A 369-amino-acid chain; its full sequence is O-methyltransferase 12 (369 aa).

S-adenosyl-L-methionine contacts are provided by residues Gly-181, Asp-204, 229-231 (GDF), Asp-230, Phe-231, and Lys-244. His-248 (proton acceptor) is an active-site residue.

Belongs to the class I-like SAM-binding methyltransferase superfamily. Cation-independent O-methyltransferase family. COMT subfamily.

It carries out the reaction resorcinol + S-adenosyl-L-methionine = 3-methoxyphenol + S-adenosyl-L-homocysteine + H(+). In terms of biological role, S-adenosyl-L-methionine dependent O-methyltransferase that may be involved in modifying resorcinol ring to synthesize a variant of 4-methyl-5-pentylbenzene-1,3-diol. The sequence is that of O-methyltransferase 12 (omt12) from Dictyostelium discoideum (Social amoeba).